Here is a 102-residue protein sequence, read N- to C-terminus: Small ribosomal subunit protein uS10 (102 aa).

This sequence belongs to the universal ribosomal protein uS10 family. Part of the 30S ribosomal subunit.

In terms of biological role, involved in the binding of tRNA to the ribosomes. In Mycoplasma capricolum subsp. capricolum (strain California kid / ATCC 27343 / NCTC 10154), this protein is Small ribosomal subunit protein uS10.